The primary structure comprises 288 residues: Glycine--tRNA ligase alpha subunit (288 aa).

The protein belongs to the class-II aminoacyl-tRNA synthetase family. Tetramer of two alpha and two beta subunits.

It localises to the cytoplasm. The enzyme catalyses tRNA(Gly) + glycine + ATP = glycyl-tRNA(Gly) + AMP + diphosphate. The chain is Glycine--tRNA ligase alpha subunit from Rickettsia rickettsii (strain Iowa).